We begin with the raw amino-acid sequence, 257 residues long: Methylthioribulose-1-phosphate dehydratase (257 aa).

Cys107 provides a ligand contact to substrate. 2 residues coordinate Zn(2+): His125 and His127. Glu148 functions as the Proton donor/acceptor in the catalytic mechanism. His210 contributes to the Zn(2+) binding site.

This sequence belongs to the aldolase class II family. MtnB subfamily. The cofactor is Zn(2+).

The protein localises to the cytoplasm. The enzyme catalyses 5-(methylsulfanyl)-D-ribulose 1-phosphate = 5-methylsulfanyl-2,3-dioxopentyl phosphate + H2O. The protein operates within amino-acid biosynthesis; L-methionine biosynthesis via salvage pathway; L-methionine from S-methyl-5-thio-alpha-D-ribose 1-phosphate: step 2/6. Its function is as follows. Catalyzes the dehydration of methylthioribulose-1-phosphate (MTRu-1-P) into 2,3-diketo-5-methylthiopentyl-1-phosphate (DK-MTP-1-P). The sequence is that of Methylthioribulose-1-phosphate dehydratase from Lachancea thermotolerans (strain ATCC 56472 / CBS 6340 / NRRL Y-8284) (Yeast).